Consider the following 280-residue polypeptide: Pantothenate synthetase (280 aa).

30-37 (MGYLHEGH) is an ATP binding site. The active-site Proton donor is the His37. Gln61 is a (R)-pantoate binding site. Gln61 is a beta-alanine binding site. Residue 147–150 (GQKD) participates in ATP binding. (R)-pantoate is bound at residue Gln153. ATP is bound by residues Val176 and 184–187 (MSSR).

Belongs to the pantothenate synthetase family. As to quaternary structure, homodimer.

The protein localises to the cytoplasm. The catalysed reaction is (R)-pantoate + beta-alanine + ATP = (R)-pantothenate + AMP + diphosphate + H(+). It functions in the pathway cofactor biosynthesis; (R)-pantothenate biosynthesis; (R)-pantothenate from (R)-pantoate and beta-alanine: step 1/1. Functionally, catalyzes the condensation of pantoate with beta-alanine in an ATP-dependent reaction via a pantoyl-adenylate intermediate. The polypeptide is Pantothenate synthetase (Thermosipho melanesiensis (strain DSM 12029 / CIP 104789 / BI429)).